We begin with the raw amino-acid sequence, 377 residues long: UPF0754 membrane protein GTNG_0550 (377 aa).

Helical transmembrane passes span 7–27 (LLFM…IAIV) and 357–377 (YLGA…GLWL).

This sequence belongs to the UPF0754 family.

Its subcellular location is the cell membrane. This Geobacillus thermodenitrificans (strain NG80-2) protein is UPF0754 membrane protein GTNG_0550.